Here is a 485-residue protein sequence, read N- to C-terminus: GTPase Obg (485 aa).

The 158-residue stretch at 2 to 159 folds into the Obg domain; it reads SKFIDRVVLH…RDLVLELKSV (158 aa). Residues 64 to 84 are disordered; the sequence is PHAKAGNGKPGEGGNRDGKMG. One can recognise an OBG-type G domain in the interval 160 to 340; the sequence is ADVGLVGFPS…LTFALADLVR (181 aa). GTP is bound by residues 166 to 173, 191 to 195, 212 to 215, 292 to 295, and 321 to 323; these read GFPSAGKS, FTTLV, DVPG, NKTD, and SAV. The Mg(2+) site is built by Ser173 and Thr193. In terms of domain architecture, OCT spans 358 to 438; it reads PIAVDESGFT…IGDVTFDWEP (81 aa). The span at 457–469 shows a compositional bias: basic and acidic residues; the sequence is LEQSDRVSAAERK. A disordered region spans residues 457–485; it reads LEQSDRVSAAERKHASRVRRGLVEDDEQR.

This sequence belongs to the TRAFAC class OBG-HflX-like GTPase superfamily. OBG GTPase family. In terms of assembly, monomer. It depends on Mg(2+) as a cofactor.

The protein localises to the cytoplasm. An essential GTPase which binds GTP, GDP and possibly (p)ppGpp with moderate affinity, with high nucleotide exchange rates and a fairly low GTP hydrolysis rate. Plays a role in control of the cell cycle, stress response, ribosome biogenesis and in those bacteria that undergo differentiation, in morphogenesis control. In Nocardia farcinica (strain IFM 10152), this protein is GTPase Obg.